A 203-amino-acid polypeptide reads, in one-letter code: Small ribosomal subunit protein uS4 (203 aa).

Residues 93-156 enclose the S4 RNA-binding domain; that stretch reads RRLDNVVYRL…MKVPAILEAV (64 aa).

The protein belongs to the universal ribosomal protein uS4 family. Part of the 30S ribosomal subunit. Contacts protein S5. The interaction surface between S4 and S5 is involved in control of translational fidelity.

In terms of biological role, one of the primary rRNA binding proteins, it binds directly to 16S rRNA where it nucleates assembly of the body of the 30S subunit. With S5 and S12 plays an important role in translational accuracy. In Streptococcus uberis (strain ATCC BAA-854 / 0140J), this protein is Small ribosomal subunit protein uS4.